The chain runs to 546 residues: Nuclear pore complex protein Nup58 (546 aa).

17 repeat units span residues 22–23 (FG), 36–37 (FG), 45–46 (FG), 64–65 (FG), 73–74 (FG), 82–83 (FG), 92–93 (FG), 101–102 (FG), 110–111 (FG), 119–120 (FG), 128–129 (FG), 137–138 (FG), 146–147 (FG), 155–156 (FG), 166–167 (FG), 197–198 (FG), and 199–200 (FG). Positions 22-200 (FGARPATTTA…TTAPPAFGFG (179 aa)) are 17 X 2 AA repeats of F-G.

It belongs to the NUP58 family. In terms of assembly, component of the nuclear pore complex. Interacts with Nup54. Interacts (via C-terminus) with fs(1)Yb; this interaction occurs in a RNA-independent manner. Interacts with sbr/nxf1. Interacts with Nxt1. In terms of processing, O-glycosylated; contains O-GlcNAc. O-GlcNAcylation increases with increasing ambient temperature.

Its subcellular location is the nucleus. The protein localises to the nuclear pore complex. Its function is as follows. Component of the nuclear pore complex, a complex required for the trafficking across the nuclear membrane. Together with Nup54, required for transposable element silencing regulation in ovarian follicle cells. By interacting with the nuclear (Nxf1/Nxt1) and cytosolic (fs(1)Yb) components of the flamenco (flam) transcripts processing pathway, enables export and subsequent piRNA production. The sequence is that of Nuclear pore complex protein Nup58 from Drosophila melanogaster (Fruit fly).